The primary structure comprises 152 residues: Deoxyuridine 5'-triphosphate nucleotidohydrolase (152 aa).

Residues 71-73 (RSG), asparagine 84, 88-90 (LID), and methionine 98 each bind substrate.

This sequence belongs to the dUTPase family. It depends on Mg(2+) as a cofactor.

The catalysed reaction is dUTP + H2O = dUMP + diphosphate + H(+). It participates in pyrimidine metabolism; dUMP biosynthesis; dUMP from dCTP (dUTP route): step 2/2. In terms of biological role, this enzyme is involved in nucleotide metabolism: it produces dUMP, the immediate precursor of thymidine nucleotides and it decreases the intracellular concentration of dUTP so that uracil cannot be incorporated into DNA. This Shewanella putrefaciens (strain CN-32 / ATCC BAA-453) protein is Deoxyuridine 5'-triphosphate nucleotidohydrolase.